Here is a 157-residue protein sequence, read N- to C-terminus: 2-C-methyl-D-erythritol 2,4-cyclodiphosphate synthase (157 aa).

Residues D9 and H11 each contribute to the a divalent metal cation site. Residues 9–11 and 35–36 contribute to the 4-CDP-2-C-methyl-D-erythritol 2-phosphate site; these read DVH and HS. H43 contributes to the a divalent metal cation binding site. 4-CDP-2-C-methyl-D-erythritol 2-phosphate-binding positions include 57–59, 62–66, 101–107, 133–136, F140, and R143; these read DIG, FPDTD, AEKPKMA, and TTTE.

This sequence belongs to the IspF family. In terms of assembly, homotrimer. It depends on a divalent metal cation as a cofactor.

It catalyses the reaction 4-CDP-2-C-methyl-D-erythritol 2-phosphate = 2-C-methyl-D-erythritol 2,4-cyclic diphosphate + CMP. It participates in isoprenoid biosynthesis; isopentenyl diphosphate biosynthesis via DXP pathway; isopentenyl diphosphate from 1-deoxy-D-xylulose 5-phosphate: step 4/6. Functionally, involved in the biosynthesis of isopentenyl diphosphate (IPP) and dimethylallyl diphosphate (DMAPP), two major building blocks of isoprenoid compounds. Catalyzes the conversion of 4-diphosphocytidyl-2-C-methyl-D-erythritol 2-phosphate (CDP-ME2P) to 2-C-methyl-D-erythritol 2,4-cyclodiphosphate (ME-CPP) with a corresponding release of cytidine 5-monophosphate (CMP). This is 2-C-methyl-D-erythritol 2,4-cyclodiphosphate synthase from Listeria monocytogenes serotype 4b (strain CLIP80459).